Consider the following 429-residue polypeptide: O-methyltransferase phnC (429 aa).

Asp285 contributes to the S-adenosyl-L-methionine binding site.

Belongs to the class I-like SAM-binding methyltransferase superfamily. Cation-independent O-methyltransferase family. COMT subfamily.

The enzyme catalyses (2'R)-atrovenetin + S-adenosyl-L-methionine = deoxyherqueinone + S-adenosyl-L-homocysteine + H(+). Its pathway is secondary metabolite biosynthesis. O-methyltransferase; part of the gene cluster that mediates the biosynthesis of phenalenones such as herqueinone, compounds that have been reported to treat tumors, bacterial infections and/or mycoses, and rheumatic diseases. The non-reducing polyketide synthase phnA synthesizes the heptaketide backbone and cyclizes it into the angular, hemiketal-containing naphtho-gamma-pyrone prephenalenone. The product template (PT) domain of phnA catalyzes only the C4-C9 aldol condensation, which is unprecedented among known PT domains. The transformation of prephenalenone to phenalenones requires an FAD-dependent monooxygenase phnB, which catalyzes the C2 aromatic hydroxylation of prephenalenone and ring opening of the gamma-pyrone ring simultaneously. Subsequent intramolecular deprotonation of C3 phenolic oxygen accelerates phenalenone ring closure to yield the tricyclic phenalenone core with a C2 hydroxylation. The prenyltransferase phnF further catalyzes reverse C-prenylation of phenalenone by direct electrophilic substitution at C6, or possibly via first a forward O-prenylation of a neighboring phenol in phenalenone, followed by a Claisen rearrangement. The hydroalkoxylation enzyme phnH catalyzes the 5-exo-trig cyclization via acid catalysis after the spontaneous deprotonation of 7-OH, which leads to the formation of the dihydrobenzofuran atrovenetin. Atrovenetin is further converted to deoxyherqueinone by the O-methyltransferase phnC which can methylate C2-OH to stabilize the northern portion of the phenalenone core. Finally, the oxidoreductase phnG converts deoxyherqueinone to herqueinone via C6 hydroxylation. The polypeptide is O-methyltransferase phnC (Penicillium herquei).